The chain runs to 631 residues: Chaperone protein HtpG (631 aa).

The interval 1–338 (MILKEQETLG…CNDLPLNISR (338 aa)) is a; substrate-binding. Residues 339–554 (EMLQHNRITQ…SNNMTTHMAK (216 aa)) form a b region. The c stretch occupies residues 555-631 (LIVASGQNKP…KLLNHDTIVN (77 aa)).

The protein belongs to the heat shock protein 90 family. In terms of assembly, homodimer.

Its subcellular location is the cytoplasm. Functionally, molecular chaperone. Has ATPase activity. In Baumannia cicadellinicola subsp. Homalodisca coagulata, this protein is Chaperone protein HtpG.